Consider the following 184-residue polypeptide: ATP synthase subunit b, chloroplastic (184 aa).

The chain crosses the membrane as a helical span at residues 27–49 (LATNPINLSVVLGVLIFFGKGVL).

It belongs to the ATPase B chain family. In terms of assembly, F-type ATPases have 2 components, F(1) - the catalytic core - and F(0) - the membrane proton channel. F(1) has five subunits: alpha(3), beta(3), gamma(1), delta(1), epsilon(1). F(0) has four main subunits: a(1), b(1), b'(1) and c(10-14). The alpha and beta chains form an alternating ring which encloses part of the gamma chain. F(1) is attached to F(0) by a central stalk formed by the gamma and epsilon chains, while a peripheral stalk is formed by the delta, b and b' chains.

The protein localises to the plastid. It is found in the chloroplast thylakoid membrane. Functionally, f(1)F(0) ATP synthase produces ATP from ADP in the presence of a proton or sodium gradient. F-type ATPases consist of two structural domains, F(1) containing the extramembraneous catalytic core and F(0) containing the membrane proton channel, linked together by a central stalk and a peripheral stalk. During catalysis, ATP synthesis in the catalytic domain of F(1) is coupled via a rotary mechanism of the central stalk subunits to proton translocation. In terms of biological role, component of the F(0) channel, it forms part of the peripheral stalk, linking F(1) to F(0). This is ATP synthase subunit b, chloroplastic from Populus alba (White poplar).